Here is a 359-residue protein sequence, read N- to C-terminus: Membrane-bound lytic murein transglycosylase C (359 aa).

The signal sequence occupies residues 1-16 (MKKYLALALIAPLLIS). Cys-17 carries N-palmitoyl cysteine lipidation. The S-diacylglycerol cysteine moiety is linked to residue Cys-17.

It belongs to the transglycosylase Slt family.

The protein resides in the cell outer membrane. It catalyses the reaction Exolytic cleavage of the (1-&gt;4)-beta-glycosidic linkage between N-acetylmuramic acid (MurNAc) and N-acetylglucosamine (GlcNAc) residues in peptidoglycan, from either the reducing or the non-reducing ends of the peptidoglycan chains, with concomitant formation of a 1,6-anhydrobond in the MurNAc residue.. Its function is as follows. Murein-degrading enzyme. May play a role in recycling of muropeptides during cell elongation and/or cell division. The chain is Membrane-bound lytic murein transglycosylase C from Escherichia coli (strain SMS-3-5 / SECEC).